A 377-amino-acid polypeptide reads, in one-letter code: DNA-directed RNA polymerase subunit alpha (377 aa).

The tract at residues 1–259 (MSDSSHNLLY…KHFSVFEKMD (259 aa)) is alpha N-terminal domain (alpha-NTD). The alpha C-terminal domain (alpha-CTD) stretch occupies residues 276 to 377 (KDDILHKLVL…KIRSSKNTKG (102 aa)).

This sequence belongs to the RNA polymerase alpha chain family. As to quaternary structure, homodimer. The RNAP catalytic core consists of 2 alpha, 1 beta, 1 beta' and 1 omega subunit. When a sigma factor is associated with the core the holoenzyme is formed, which can initiate transcription.

It carries out the reaction RNA(n) + a ribonucleoside 5'-triphosphate = RNA(n+1) + diphosphate. DNA-dependent RNA polymerase catalyzes the transcription of DNA into RNA using the four ribonucleoside triphosphates as substrates. The polypeptide is DNA-directed RNA polymerase subunit alpha (Chlamydia trachomatis serovar D (strain ATCC VR-885 / DSM 19411 / UW-3/Cx)).